We begin with the raw amino-acid sequence, 492 residues long: Cysteine--tRNA ligase (492 aa).

Cys-27 contributes to the Zn(2+) binding site. Positions Val-29–His-39 match the 'HIGH' region motif. Residues Cys-211, His-236, and Glu-240 each coordinate Zn(2+). Positions Lys-268–Ser-272 match the 'KMSKS' region motif. Lys-271 serves as a coordination point for ATP.

It belongs to the class-I aminoacyl-tRNA synthetase family. Monomer. Requires Zn(2+) as cofactor.

The protein resides in the cytoplasm. It catalyses the reaction tRNA(Cys) + L-cysteine + ATP = L-cysteinyl-tRNA(Cys) + AMP + diphosphate. This chain is Cysteine--tRNA ligase, found in Prochlorococcus marinus subsp. pastoris (strain CCMP1986 / NIES-2087 / MED4).